The chain runs to 734 residues: Transcriptional regulator AacuB (734 aa).

The zn(2)-C6 fungal-type DNA-binding region spans 26–52 (CVLCQQRKIKCDRTFPCTNCVRAHVQC). Residues 86-107 (FDPLHTPTADHRSASDDGRDDL) show a composition bias toward basic and acidic residues. The segment at 86–122 (FDPLHTPTADHRSASDDGRDDLPEGAESEGTFGEREK) is disordered.

The protein localises to the nucleus. Its function is as follows. Transcriptional regulator; part of the gene cluster that mediates the biosynthesis of the tetrahydroxanthone dimer secalonic acid D. This is Transcriptional regulator AacuB from Aspergillus aculeatus (strain ATCC 16872 / CBS 172.66 / WB 5094).